A 279-amino-acid polypeptide reads, in one-letter code: Digeranylgeranylglyceryl phosphate synthase (279 aa).

A run of 8 helical transmembrane segments spans residues 14–34 (VKNCLTASFGTIIGGLIASNF), 36–56 (FGLIGYILLASLIVFLVCGFG), 94–114 (LMISGIIISLFNMICFAIALI), 131–153 (IIGNLIVAYLTGSIFIFGGASVG), 157–175 (ITLILFLCALFATWSREII), 201–221 (IFVAIGFLLCSILLSPLPYIL), 224–244 (FGAPYLMAIMICNVLFILAVL), and 259–279 (SKYIKIIMNLVLLSFVIGSLM).

The protein belongs to the UbiA prenyltransferase family. DGGGP synthase subfamily. The cofactor is Mg(2+).

It is found in the cell membrane. It carries out the reaction sn-3-O-(geranylgeranyl)glycerol 1-phosphate + (2E,6E,10E)-geranylgeranyl diphosphate = 2,3-bis-O-(geranylgeranyl)-sn-glycerol 1-phosphate + diphosphate. Its pathway is membrane lipid metabolism; glycerophospholipid metabolism. Functionally, prenyltransferase that catalyzes the transfer of the geranylgeranyl moiety of geranylgeranyl diphosphate (GGPP) to the C2 hydroxyl of (S)-3-O-geranylgeranylglyceryl phosphate (GGGP). This reaction is the second ether-bond-formation step in the biosynthesis of archaeal membrane lipids. This chain is Digeranylgeranylglyceryl phosphate synthase, found in Methanococcus aeolicus (strain ATCC BAA-1280 / DSM 17508 / OCM 812 / Nankai-3).